The sequence spans 537 residues: Pancreatic secretory granule membrane major glycoprotein GP2 (537 aa).

An N-terminal signal peptide occupies residues 1 to 28 (MPHLMERMVGSGLLWLALVSCILTQASA). The segment at 41–60 (SYGLDLDCGAPGTPEAHVCF) is beta hairpin. 11 disulfides stabilise this stretch: Cys-48/Cys-59, Cys-63/Cys-157, Cys-85/Cys-172, Cys-107/Cys-145, Cys-113/Cys-177, Cys-138/Cys-146, Cys-190/Cys-200, Cys-194/Cys-209, Cys-211/Cys-241, Cys-229/Cys-320, and Cys-261/Cys-284. The tract at residues 61–81 (DPCQNYTLLDEPFRSTENSAG) is D10C. An N-linked (GlcNAc...) (high mannose) asparagine glycan is attached at Asn-65. N-linked (GlcNAc...) asparagine glycans are attached at residues Asn-88, Asn-122, and Asn-134. The 45-residue stretch at 186 to 230 (VEDKCEKACRPEEECLALNSTWGCFCRQDLNSSDVHSLQPQLDCG) folds into the EGF-like domain. N-linked (GlcNAc...) asparagine glycans are attached at residues Asn-204, Asn-216, and Asn-260. The ZP-N stretch occupies residues 228-321 (DCGPREIKVK…TILNINFQCA (94 aa)). A ZP domain is found at 228-484 (DCGPREIKVK…PSCSRSQVRS (257 aa)). Residues Asn-291 and Asn-342 are each glycosylated (N-linked (GlcNAc...) asparagine). Positions 322-345 (YPLDMKVSLQAALQPIVSSLNVSV) are flexible ZP-N/ZP-C linker. Positions 346-357 (DGNGEFIVRMAL) are internal hydrophobic patch (IHP). The ZP-C stretch occupies residues 346–484 (DGNGEFIVRM…PSCSRSQVRS (139 aa)). Asn-362 carries an N-linked (GlcNAc...) asparagine glycan. Disulfide bonds link Cys-401/Cys-461, Cys-422/Cys-477, and Cys-466/Cys-473. The tract at residues 491–499 (LARVLDLGP) is external hydrophobic patch (EHP). Asn-512 carries GPI-anchor amidated asparagine lipidation. Residues 513–537 (GTPSTAGFLVAWPMVLLTVLLAWLF) constitute a propeptide, removed in mature form.

Interacts with SYCN. Interacts with bacterial adhesin fimH. N-glycosylated. Glycosylated Asn-65 may be required for interaction with bacterial adhesin fimH. In terms of tissue distribution, expressed in pancreas (at protein level). Specifically expressed by M (microfold) cells which are atypical epithelial cells of the intestine (at protein level).

The protein localises to the zymogen granule membrane. The protein resides in the secreted. It localises to the cell membrane. Its subcellular location is the apical cell membrane. It is found in the membrane raft. The protein localises to the endosome. Its function is as follows. Functions as an intestinal M-cell transcytotic receptor specific for type-I-piliated bacteria that participates in the mucosal immune response toward these bacteria. At the apical membrane of M-cells it binds fimH, a protein of the bacteria type I pilus tip. Internalizes bound bacteria, like E.coli and S.typhimurium, from the lumen of the intestine and delivers them, through M-cells, to the underlying organized lymphoid follicles where they are captured by antigen-presenting dendritic cells to elicit a mucosal immune response. The polypeptide is Pancreatic secretory granule membrane major glycoprotein GP2 (Homo sapiens (Human)).